We begin with the raw amino-acid sequence, 1188 residues long: AT-rich interactive domain-containing protein 5B (1188 aa).

Residue lysine 130 forms a Glycyl lysine isopeptide (Lys-Gly) (interchain with G-Cter in SUMO2) linkage. The disordered stretch occupies residues 251-277 (RPRKKKPCPQRRDSFSGVKDSNNNSDG). Serine 264 is modified (phosphoserine). Residues 318–410 (RADEQAFLVA…LILPYERFIK (93 aa)) enclose the ARID domain. Lysine 336 bears the N6,N6-dimethyllysine mark. Residues 412–611 (EEDKPLPPIK…QPPLANQNET (200 aa)) form a disordered region. Lysine 445 is covalently cross-linked (Glycyl lysine isopeptide (Lys-Gly) (interchain with G-Cter in SUMO2)). Basic and acidic residues predominate over residues 446–458 (HEIPKSKKEKENA). Residues lysine 494 and lysine 496 each participate in a glycyl lysine isopeptide (Lys-Gly) (interchain with G-Cter in SUMO2) cross-link. The segment covering 597-609 (SFPTTQPPLANQN) has biased composition (polar residues). Residues lysine 767, lysine 774, lysine 803, and lysine 810 each participate in a glycyl lysine isopeptide (Lys-Gly) (interchain with G-Cter in SUMO2) cross-link. Disordered regions lie at residues 846–874 (HHLHNEQTSKYPSRDMYRESENSSFPSHR) and 891–918 (DKKSAAAEAPTDDQPTDLSLPKNPHKPT). A compositionally biased stretch (basic and acidic residues) spans 847 to 866 (HLHNEQTSKYPSRDMYRESE). Glycyl lysine isopeptide (Lys-Gly) (interchain with G-Cter in SUMO2) cross-links involve residues lysine 893, lysine 916, lysine 920, and lysine 935. The tract at residues 956–978 (RVSPMTMSGPKKYPESLSRSGKP) is disordered. Glycyl lysine isopeptide (Lys-Gly) (interchain with G-Cter in SUMO2) cross-links involve residues lysine 988, lysine 1000, and lysine 1013. The disordered stretch occupies residues 1028–1070 (ARAVSPLDPSKEVSGKEKASEQESEGSKAAHGGHSGGGSEGHK). The residue at position 1032 (serine 1032) is a Phosphoserine. The span at 1036 to 1055 (PSKEVSGKEKASEQESEGSK) shows a compositional bias: basic and acidic residues. Glycyl lysine isopeptide (Lys-Gly) (interchain with G-Cter in SUMO2) cross-links involve residues lysine 1055 and lysine 1070. Serine 1133 bears the Phosphoserine mark.

It belongs to the ARID5B family. Methylation at Lys-336 prevents DNA-binding. Demethylation by PHF2 promotes recruitment of the PHF2-ARID5B complex to promoters. Widely expressed, including in liver (at protein level).

It is found in the nucleus. Its function is as follows. Transcription coactivator that binds to the 5'-AATA[CT]-3' core sequence and plays a key role in adipogenesis and liver development. Acts by forming a complex with phosphorylated PHF2, which mediates demethylation at Lys-336, leading to target the PHF2-ARID5B complex to target promoters, where PHF2 mediates demethylation of dimethylated 'Lys-9' of histone H3 (H3K9me2), followed by transcription activation of target genes. The PHF2-ARID5B complex acts as a coactivator of HNF4A in liver. Required for adipogenesis: regulates triglyceride metabolism in adipocytes by regulating expression of adipogenic genes. Overexpression leads to induction of smooth muscle marker genes, suggesting that it may also act as a regulator of smooth muscle cell differentiation and proliferation. Represses the cytomegalovirus enhancer. The sequence is that of AT-rich interactive domain-containing protein 5B (ARID5B) from Homo sapiens (Human).